A 122-amino-acid chain; its full sequence is Large ribosomal subunit protein uL14 (122 aa).

It belongs to the universal ribosomal protein uL14 family. Part of the 50S ribosomal subunit. Forms a cluster with proteins L3 and L19. In the 70S ribosome, L14 and L19 interact and together make contacts with the 16S rRNA in bridges B5 and B8.

Functionally, binds to 23S rRNA. Forms part of two intersubunit bridges in the 70S ribosome. The chain is Large ribosomal subunit protein uL14 from Lactobacillus delbrueckii subsp. bulgaricus (strain ATCC 11842 / DSM 20081 / BCRC 10696 / JCM 1002 / NBRC 13953 / NCIMB 11778 / NCTC 12712 / WDCM 00102 / Lb 14).